Here is a 480-residue protein sequence, read N- to C-terminus: Bindin (480 aa).

The N-terminal stretch at 1-20 (MDSQVLPLILLIIVFAASSA) is a signal peptide. Positions 21–247 (HGHFPHRTNQ…GEMRAERQRR (227 aa)) are excised as a propeptide. Positions 161–211 (AEMRHRRSAKDDDVNKRASPRKGSSPAGKKVQIMEQDAGKGDAHNEKEVVK) are disordered. Residues 197–211 (DAGKGDAHNEKEVVK) are compositionally biased toward basic and acidic residues. The interval 377–385 (LRHLRHHSN) is fucose-binding domain. Residues 431-451 (GAGAVAGAAMAAGMPPYPGGA) traverse the membrane as a helical segment. Positions 452–480 (QGGMRVGGQPQNPMGGNAYNPMTGYRQQG) are disordered.

The protein belongs to the bindin family.

The protein localises to the cytoplasmic vesicle. It localises to the secretory vesicle. Its subcellular location is the acrosome membrane. Functionally, species-specific sea urchin sperm protein required for adhesion of sperm to the egg surface during fertilization. Bindin coats the acrosomal process after it is externalized by the acrosome reaction. It binds to sulfated, fucose-containing polysaccharides on the vitelline layer receptor proteoglycans which cover the egg plasma membrane. This chain is Bindin, found in Arbacia punctulata (Punctuate sea urchin).